The following is a 1089-amino-acid chain: GPI ethanolamine phosphate transferase 3, catalytic subunit (1089 aa).

A helical transmembrane segment spans residues 4–24; the sequence is ASVLLFLAWVCFLFYAGIALF. Asn268 carries an N-linked (GlcNAc...) asparagine glycan. A run of 13 helical transmembrane segments spans residues 457–477, 482–502, 510–530, 541–561, 575–595, 668–688, 701–721, 747–767, 830–850, 857–877, 944–964, 1014–1034, and 1048–1068; these read LLAA…SPGF, LLLT…GLLG, LVLL…WKAW, TLFP…AVFF, FLLG…GQLL, LWYG…RLWL, MLFV…YWAL, VAGL…TVLV, SVYS…LLLL, LVFL…AAGI, FASH…PFLC, LKYL…ASIL, and FIFE…GIAL.

This sequence belongs to the PIGG/PIGN/PIGO family. PIGO subfamily. Part of the ethanolamine phosphate transferase 3 complex composed by PIGO and PIGF. PIGF is required to stabilize PIGO.

The protein resides in the endoplasmic reticulum membrane. It participates in glycolipid biosynthesis; glycosylphosphatidylinositol-anchor biosynthesis. Functionally, catalytic subunit of the ethanolamine phosphate transferase 3 complex that transfers an ethanolamine phosphate (EtNP) from a phosphatidylethanolamine (PE) to the 6-OH position of the third alpha-1,2-linked mannose of an alpha-D-Man-(1-&gt;2)-alpha-D-Man-(1-&gt;6)-2-PEtn-alpha-D-Man-(1-&gt;4)-alpha-D-GlcN-(1-&gt;6)-(1-radyl,2-acyl-sn-glycero-3-phospho)-2-acyl-inositol (also termed H6) intermediate to generate a 6-PEtn-alpha-D-Man-(1-&gt;2)-alpha-D-Man-(1-&gt;6)-2-PEtn-alpha-D-Man-(1-&gt;4)-alpha-D-GlcN-(1-&gt;6)-(1-radyl,2-acyl-sn-glycero-3-phospho)-2-acyl-inositol (also termed H7) and participates in the tenth step of the glycosylphosphatidylinositol-anchor biosynthesis. The chain is GPI ethanolamine phosphate transferase 3, catalytic subunit from Homo sapiens (Human).